The sequence spans 882 residues: Homeobox-leucine zipper protein ROC3 (882 aa).

The interval 104-144 (DVDDDHKPQHSGHDQPPDAAQPSGAAGGNAKKKRYHRHTAH) is disordered. A compositionally biased stretch (basic and acidic residues) spans 107–119 (DDHKPQHSGHDQP). The segment covering 133–143 (AKKKRYHRHTA) has biased composition (basic residues). The segment at residues 134-193 (KKKRYHRHTAHQIQQMEALFKECPHPDDKQRLKLSQELGLKPRQVKFWFQNRRTQMKAQQ) is a DNA-binding region (homeobox). Residues 200–263 (ILRAENENLK…LDRLACIATR (64 aa)) adopt a coiled-coil conformation. The START domain occupies 340–584 (QEQDKQLVVD…LQRQCERLAS (245 aa)). A compositionally biased stretch (low complexity) spans 782–816 (AAAPTISSSTTTTTGNGNGETSSTPPRNSSSNNNN). The tract at residues 782–820 (AAAPTISSSTTTTTGNGNGETSSTPPRNSSSNNNNADEL) is disordered.

This sequence belongs to the HD-ZIP homeobox family. Class IV subfamily.

It localises to the nucleus. Its function is as follows. Probable transcription factor. The protein is Homeobox-leucine zipper protein ROC3 (ROC3) of Oryza sativa subsp. indica (Rice).